An 89-amino-acid chain; its full sequence is MANHKSAEKRARQTIKRTERNRFYRTRLKNITKAVREAVEAKDVNTANEALKLANKSIHSFVSKGFLKKQTAARRVSRLAQLVNTLKAA.

Positions 1 to 20 (MANHKSAEKRARQTIKRTER) are disordered.

Belongs to the bacterial ribosomal protein bS20 family.

In terms of biological role, binds directly to 16S ribosomal RNA. This is Small ribosomal subunit protein bS20 from Campylobacter curvus (strain 525.92).